An 829-amino-acid chain; its full sequence is High affinity cAMP-specific and IBMX-insensitive 3',5'-cyclic phosphodiesterase 8A (829 aa).

The tract at residues 16-46 is disordered; it reads EDAPSPAAPPLSSGGPRLPQGQKTAALPRTR. S20 carries the phosphoserine modification. In terms of domain architecture, PAS spans 213-283; sequence ACNSVFTALE…DTINSCIRIG (71 aa). The region spanning 287 to 329 is the PAC domain; sequence QGIYYAKKKNGDNIQQNVKIIPVIGQGGKIRHYVSIIRVCNGN. The segment at 341 to 360 is disordered; the sequence is SDTHTDNQTGKHKDRRKGSL. At S359 the chain carries Phosphoserine; by PKA. A phosphoserine mark is found at S386 and S457. Residues 454-461 are involved in RAF1-binding; it reads RRLSGNEY. Y461 carries the phosphotyrosine modification. A PDEase domain is found at 480–820; that stretch reads SLDDVPPRIA…KYWKGLDEMK (341 aa). Residue H556 is the Proton donor of the active site. A divalent metal cation contacts are provided by H560, H596, D597, and D726.

Belongs to the cyclic nucleotide phosphodiesterase family. PDE8 subfamily. In terms of assembly, interacts with RAF1. The interaction promotes RAF1 activity. Requires a divalent metal cation as cofactor. In terms of processing, phosphorylated at Ser-359 by PKA under elevated cAMP conditions, this enhances catalytic activity. As to expression, expressed in most tissues except thymus and peripheral blood leukocytes. Highest levels in testis, ovary, small intestine and colon.

It catalyses the reaction 3',5'-cyclic AMP + H2O = AMP + H(+). The protein operates within purine metabolism; 3',5'-cyclic AMP degradation; AMP from 3',5'-cyclic AMP: step 1/1. Its activity is regulated as follows. Inhibited by dipyridimole. Insensitive to selective PDE inhibitors including rolipram and zaprinast as well as to the non-selective inhibitor, IBMX. Unaffected by cGMP. In terms of biological role, hydrolyzes the second messenger cAMP, which is a key regulator of many important physiological processes. May be involved in maintaining basal levels of the cyclic nucleotide and/or in the cAMP regulation of germ cell development. Binding to RAF1 reduces RAF1 'Ser-259' inhibitory-phosphorylation and stimulates RAF1-dependent EGF-activated ERK-signaling. Protects against cell death induced by hydrogen peroxide and staurosporine. The sequence is that of High affinity cAMP-specific and IBMX-insensitive 3',5'-cyclic phosphodiesterase 8A (PDE8A) from Homo sapiens (Human).